We begin with the raw amino-acid sequence, 201 residues long: FMN-dependent NADH:quinone oxidoreductase (201 aa).

FMN-binding positions include Ser-10, 16–18 (SQS), and 96–99 (MYNF).

This sequence belongs to the azoreductase type 1 family. Homodimer. It depends on FMN as a cofactor.

The enzyme catalyses 2 a quinone + NADH + H(+) = 2 a 1,4-benzosemiquinone + NAD(+). It carries out the reaction N,N-dimethyl-1,4-phenylenediamine + anthranilate + 2 NAD(+) = 2-(4-dimethylaminophenyl)diazenylbenzoate + 2 NADH + 2 H(+). Functionally, quinone reductase that provides resistance to thiol-specific stress caused by electrophilic quinones. In terms of biological role, also exhibits azoreductase activity. Catalyzes the reductive cleavage of the azo bond in aromatic azo compounds to the corresponding amines. The protein is FMN-dependent NADH:quinone oxidoreductase of Sodalis glossinidius (strain morsitans).